The following is a 262-amino-acid chain: Nodulation protein J (262 aa).

Positions Ala33–Arg259 constitute an ABC transmembrane type-2 domain. 7 helical membrane-spanning segments follow: residues Ile35–Met55, Gly62–Ser82, Ala102–Ala122, Leu127–Leu147, Leu148–Val168, Tyr177–Phe197, and Leu231–Leu251.

This sequence belongs to the ABC-2 integral membrane protein family. Lipooligosaccharide exporter (TC 3.A.1.102) subfamily. The complex is composed of two ATP-binding proteins (NodI) and two transmembrane proteins (NodJ).

The protein localises to the cell inner membrane. Its function is as follows. Part of the ABC transporter complex NodIJ involved in the export of the nodulation factors (Nod factors), the bacterial signal molecules that induce symbiosis and subsequent nodulation induction. Nod factors are LCO (lipo-chitin oligosaccharide), a modified beta-1,4-linked N-acetylglucosamine oligosaccharide. This subunit encodes the transporter. The chain is Nodulation protein J (nodJ) from Rhizobium meliloti (strain 1021) (Ensifer meliloti).